The following is a 302-amino-acid chain: Sulfate adenylyltransferase subunit 2 (302 aa).

It belongs to the PAPS reductase family. CysD subfamily. Heterodimer composed of CysD, the smaller subunit, and CysN.

It catalyses the reaction sulfate + ATP + H(+) = adenosine 5'-phosphosulfate + diphosphate. It functions in the pathway sulfur metabolism; hydrogen sulfide biosynthesis; sulfite from sulfate: step 1/3. Functionally, with CysN forms the ATP sulfurylase (ATPS) that catalyzes the adenylation of sulfate producing adenosine 5'-phosphosulfate (APS) and diphosphate, the first enzymatic step in sulfur assimilation pathway. APS synthesis involves the formation of a high-energy phosphoric-sulfuric acid anhydride bond driven by GTP hydrolysis by CysN coupled to ATP hydrolysis by CysD. The polypeptide is Sulfate adenylyltransferase subunit 2 (Escherichia coli O9:H4 (strain HS)).